The sequence spans 453 residues: tRNA-2-methylthio-N(6)-dimethylallyladenosine synthase (453 aa).

The region spanning 4 to 118 is the MTTase N-terminal domain; sequence KKFYIENYGC…IPNLINNFFK (115 aa). Cys13, Cys49, Cys83, Cys156, Cys160, and Cys163 together coordinate [4Fe-4S] cluster. Residues 142-388 form the Radical SAM core domain; sequence EEKKITAFVT…NLQKTHSYYR (247 aa). The 64-residue stretch at 390–453 folds into the TRAM domain; that stretch reads RKYIGSIQDI…SATLVGDIYV (64 aa).

Belongs to the methylthiotransferase family. MiaB subfamily. In terms of assembly, monomer. Requires [4Fe-4S] cluster as cofactor.

The protein resides in the cytoplasm. It carries out the reaction N(6)-dimethylallyladenosine(37) in tRNA + (sulfur carrier)-SH + AH2 + 2 S-adenosyl-L-methionine = 2-methylsulfanyl-N(6)-dimethylallyladenosine(37) in tRNA + (sulfur carrier)-H + 5'-deoxyadenosine + L-methionine + A + S-adenosyl-L-homocysteine + 2 H(+). Catalyzes the methylthiolation of N6-(dimethylallyl)adenosine (i(6)A), leading to the formation of 2-methylthio-N6-(dimethylallyl)adenosine (ms(2)i(6)A) at position 37 in tRNAs that read codons beginning with uridine. In Karelsulcia muelleri (strain GWSS) (Sulcia muelleri), this protein is tRNA-2-methylthio-N(6)-dimethylallyladenosine synthase.